Here is a 465-residue protein sequence, read N- to C-terminus: Gamma-aminobutyric acid receptor subunit gamma-1 (465 aa).

Residues 1-35 form the signal peptide; the sequence is MGPLKAFLFSPFLLRSQSRGVRLVFLLLTLHLGNC. The Extracellular segment spans residues 36-273; the sequence is VDKADDEDDE…FDLSRRMGYF (238 aa). Asparagine 50 and asparagine 127 each carry an N-linked (GlcNAc...) asparagine glycan. Residues cysteine 188 and cysteine 202 are joined by a disulfide bond. An N-linked (GlcNAc...) asparagine glycan is attached at asparagine 245. Residues 274-294 traverse the membrane as a helical segment; sequence TIQTYIPCILTVVLSWVSFWI. Residues 295-300 lie on the Cytoplasmic side of the membrane; the sequence is NKDAVP. The chain crosses the membrane as a helical span at residues 301 to 320; sequence ARTSLGITTVLTMTTLSTIA. Residues 321 to 328 are Extracellular-facing; it reads RKSLPKVS. A helical transmembrane segment spans residues 329 to 349; it reads YVTAMDLFVSVCFIFVFAALM. The Cytoplasmic portion of the chain corresponds to 350-444; it reads EYGTLHYFTS…RIAKIDSYSR (95 aa). Residues 445–465 form a helical membrane-spanning segment; the sequence is IFFPTAFALFNLVYWVGYLYL.

Belongs to the ligand-gated ion channel (TC 1.A.9) family. Gamma-aminobutyric acid receptor (TC 1.A.9.5) subfamily. GABRG1 sub-subfamily. In terms of assembly, heteropentamer, formed by a combination of alpha (GABRA1-6), beta (GABRB1-3), gamma (GABRG1-3), delta (GABRD), epsilon (GABRE), rho (GABRR1-3), pi (GABRP) and theta (GABRQ) chains, each subunit exhibiting distinct physiological and pharmacological properties. May be palmitoylated.

It localises to the postsynaptic cell membrane. It is found in the cell membrane. The catalysed reaction is chloride(in) = chloride(out). Gamma subunit of the heteropentameric ligand-gated chloride channel gated by gamma-aminobutyric acid (GABA), a major inhibitory neurotransmitter in the brain. GABA-gated chloride channels, also named GABA(A) receptors (GABAAR), consist of five subunits arranged around a central pore and contain GABA active binding site(s) located at the alpha and beta subunit interface(s). When activated by GABA, GABAARs selectively allow the flow of chloride anions across the cell membrane down their electrochemical gradient. Chloride influx into the postsynaptic neuron following GABAAR opening decreases the neuron ability to generate a new action potential, thereby reducing nerve transmission. In Homo sapiens (Human), this protein is Gamma-aminobutyric acid receptor subunit gamma-1.